Reading from the N-terminus, the 160-residue chain is SsrA-binding protein (160 aa).

Basic and acidic residues predominate over residues 138–148 (KRDDIKDREWQ). Residues 138–160 (KRDDIKDREWQTAKSRIMKHANR) form a disordered region.

The protein belongs to the SmpB family.

Its subcellular location is the cytoplasm. Functionally, required for rescue of stalled ribosomes mediated by trans-translation. Binds to transfer-messenger RNA (tmRNA), required for stable association of tmRNA with ribosomes. tmRNA and SmpB together mimic tRNA shape, replacing the anticodon stem-loop with SmpB. tmRNA is encoded by the ssrA gene; the 2 termini fold to resemble tRNA(Ala) and it encodes a 'tag peptide', a short internal open reading frame. During trans-translation Ala-aminoacylated tmRNA acts like a tRNA, entering the A-site of stalled ribosomes, displacing the stalled mRNA. The ribosome then switches to translate the ORF on the tmRNA; the nascent peptide is terminated with the 'tag peptide' encoded by the tmRNA and targeted for degradation. The ribosome is freed to recommence translation, which seems to be the essential function of trans-translation. This chain is SsrA-binding protein, found in Serratia proteamaculans (strain 568).